The following is a 45-amino-acid chain: Large ribosomal subunit protein bL34 (45 aa).

The segment at R26–A45 is disordered.

The protein belongs to the bacterial ribosomal protein bL34 family.

The sequence is that of Large ribosomal subunit protein bL34 from Parafrankia sp. (strain EAN1pec).